The following is a 137-amino-acid chain: MRTLWILAVLLVSVDGSMFNLWKMIMVMTGKEATKNYGMYGCNCGPMKRGKPKDATDQCCADHDCCYKKLTDCDPKKESYSYKFEKGEILCGETNPCLNQACECDKAVATCFRDNLDTYNKKQQFNTGIFCSKAKAC.

The N-terminal stretch at 1–16 is a signal peptide; that stretch reads MRTLWILAVLLVSVDG. Intrachain disulfides connect cysteine 42-cysteine 131, cysteine 44-cysteine 60, cysteine 59-cysteine 111, cysteine 65-cysteine 137, cysteine 66-cysteine 104, cysteine 73-cysteine 97, and cysteine 91-cysteine 102. The tract at residues 121–133 is important for membrane-damaging activities in eukaryotes and bacteria; heparin-binding; that stretch reads KKQQFNTGIFCSK.

As to quaternary structure, monomer. In terms of tissue distribution, expressed by the venom gland.

It localises to the secreted. Its activity is regulated as follows. Heparin reduces its edema-inducing activity. Snake venom phospholipase A2 homolog that lacks enzymatic activity. Shows myotoxin activities and displays edema-inducing activities. A model of myotoxic mechanism has been proposed: an apo Lys49-PLA2 is activated by the entrance of a hydrophobic molecule (e.g. fatty acid) at the hydrophobic channel of the protein leading to a reorientation of a monomer. This reorientation causes a transition between 'inactive' to 'active' states, causing alignment of C-terminal and membrane-docking sites (MDoS) side-by-side and putting the membrane-disruption sites (MDiS) in the same plane, exposed to solvent and in a symmetric position for both monomers. The MDoS region stabilizes the toxin on membrane by the interaction of charged residues with phospholipid head groups. Subsequently, the MDiS region destabilizes the membrane with penetration of hydrophobic residues. This insertion causes a disorganization of the membrane, allowing an uncontrolled influx of ions (i.e. calcium and sodium), and eventually triggering irreversible intracellular alterations and cell death. In Calloselasma rhodostoma (Malayan pit viper), this protein is Basic phospholipase A2 homolog W6D49.